The chain runs to 658 residues: Translation factor GUF1, mitochondrial (658 aa).

A mitochondrion-targeting transit peptide spans 1–40; that stretch reads MRGCLQTVRWLTSAWQRPPSYPPLSRAAPCRFFNVSIPRN. Positions 60 to 240 constitute a tr-type G domain; the sequence is DRFRNFCIVA…TVVEQIPAPV (181 aa). GTP-binding positions include 69–76, 133–137, and 187–190; these read AHVDHGKS, DTPGH, and NKVD.

The protein belongs to the TRAFAC class translation factor GTPase superfamily. Classic translation factor GTPase family. LepA subfamily.

The protein localises to the mitochondrion inner membrane. It catalyses the reaction GTP + H2O = GDP + phosphate + H(+). In terms of biological role, promotes mitochondrial protein synthesis. May act as a fidelity factor of the translation reaction, by catalyzing a one-codon backward translocation of tRNAs on improperly translocated ribosomes. Binds to mitochondrial ribosomes in a GTP-dependent manner. This is Translation factor GUF1, mitochondrial from Paracoccidioides brasiliensis (strain Pb18).